The primary structure comprises 290 residues: MSLKSAPYLSEISVSNGDSGIGFDGGCADPYAPSRVPSRRWDYSTKWDMKITGAAREFNLSKQPVLTGLINSMRMKTSLTHPEIHVVWRGLVPPAVCRDDVVVTLRFTPDRSEKMGLIAQHTHGMHLYMHHVFYPSHSIRVGPGEPLPWAVGFSVPDFSLDPNYTIAEVHVRLTGYFSELPEYDIQRDSELISIVPMEEHVTGYATSAPRIPNTAWVARGYKIGVNGNSLAKKIKFLQEIGVDIEALRMVGQLDNTLKKVSPRAIDGSPSAEAKSEAARLVNAHVKTLTA.

In Lettuce big-vein associated virus (isolate Japan/Kagawa) (LBVaV), this protein is Protein 3.